Here is a 316-residue protein sequence, read N- to C-terminus: Small kinetochore-associated protein (316 aa).

The residue at position 128 (Ser-128) is a Phosphoserine. The interaction with SPAG5 stretch occupies residues 159–316; that stretch reads VRKGYKPLSK…LKEMEQLLEM (158 aa). Coiled coils occupy residues 166-216 and 248-316; these read LSKQ…FRDN and SMLL…LLEM.

Part of an astrin (SPAG5)-kinastrin (SKAP) complex containing KNSTRN, SPAG5, PLK1, DYNLL1 and SGO2. Interacts with SPAG5. Directly binds to microtubules, although at relatively low affinity. Interacts with CENPE; this interaction greatly favors microtubule-binding. Interacts with DSN1/MIS13; leading to localization to kinetochores. Interacts with MAPRE1/EB1; leading to localization to the microtubule plus ends. Interacts with PRPF19. Interacts with DYNLL1. Interacts with MAP4. As to expression, widely expressed, including in skin.

The protein resides in the nucleus. Its subcellular location is the chromosome. It localises to the centromere. The protein localises to the kinetochore. It is found in the cytoplasm. The protein resides in the cytoskeleton. Its subcellular location is the spindle pole. It localises to the microtubule organizing center. Essential component of the mitotic spindle required for faithful chromosome segregation and progression into anaphase. Promotes the metaphase-to-anaphase transition and is required for chromosome alignment, normal timing of sister chromatid segregation, and maintenance of spindle pole architecture. The astrin (SPAG5)-kinastrin (SKAP) complex promotes stable microtubule-kinetochore attachments. Required for kinetochore oscillations and dynamics of microtubule plus-ends during live cell mitosis, possibly by forming a link between spindle microtubule plus-ends and mitotic chromosomes to achieve faithful cell division. May be involved in UV-induced apoptosis via its interaction with PRPF19; however, these results need additional evidences. The sequence is that of Small kinetochore-associated protein from Homo sapiens (Human).